The chain runs to 100 residues: Defensin-6 (100 aa).

An N-terminal signal peptide occupies residues 1 to 19 (MRTLTILTAVLLVALQAKA). The propeptide occupies 20 to 68 (EPLQAEDEPLQAKAYEADAQEQRGANDQDFAVSFAEDASSSLRALGSTR). Disulfide bonds link cysteine 72/cysteine 99, cysteine 74/cysteine 88, and cysteine 78/cysteine 98.

Belongs to the alpha-defensin family. In terms of assembly, homodimer. Self-assembles into higher-order oligomers termed nanonets, fibril-like structures that entrap microbes. Self-assembly into nanonets seems to protect against proteolytic digestion in duodenal fluid. Interacts with Y.enterocolitica invasin and S.typhimurium fliC/flagellim; the interaction creates an anchoring site for progressive DEFA6 self-assembly into nanonets. Post-translationally, proteolytically cleaved by trypsin at Arg-68; the propeptide is stored in the tissue of the small intestine and the mature peptide is found in the luminal fluid; cleavage may occur during or after release into the lumen. The N-terminal propeptide region suppresses self-assembly and renders DEFA6 propeptide unable to agglutinate bacteria and protect human epithelial cells from bacterial invasion. In terms of processing, under reducing conditions, naturally present in the gut owing to the low redox potential or enzymatically generated by the thioredoxin system, the disulfide bridges are opened leading to a conformational change of DEF6, thereby changing its antimicrobial spectrum. The reduced form exhibits inhibitory activity against anaerobic bacteria, in contrast to the minimal antimicrobial activity of the disulfide-linked oxidized form. The formation of higher-order nanonets and bacterial entrapment is independent of the redox state.

It localises to the secreted. It is found in the cytoplasmic vesicle. The protein resides in the secretory vesicle. In terms of biological role, host-defense peptide that contributes to intestinal innate immunity and mediates homeostasis at mucosal surfaces by forming higher-order oligomers that capture bacteria and prevent microbial invasion of the epithelium. After binding to bacterial surface proteins, undergoes ordered self-assembly to form fibril-like nanonets that surround and entangle bacteria and thereby prevent bacterial invasion across the epithelial barrier. Entangles and agglutinates Gram-negative bacteria, such as E.coli, S.typhimurium and Y.enterocolitica, and Gram-positive bacteria such as L.monocytogenes, thereby protecting the intestine against invasion by enteric bacterial pathogens. Blocks adhesion of C.albicans to intestinal epithelial cells and thereby suppresses fungal invasion of epithelial cells and biofilm formation. Under reducing conditions and in an acidic environment similar to the intestinal milieu, exhibits inhibitory activity against anaerobic bacteria such as B.adolescentis, L.acidophilus, and B.breve, as well as B.longum and S.thermophilus, possibly by leading to alterations in bacterial cell envelope structures. The disulfide-linked oxidized form exhibits negligible antimicrobial activity against Gram-negative and Gram-positive bacteria, as compared to the enteric defensin DEFA5. The protein is Defensin-6 (DEFA6) of Pan troglodytes (Chimpanzee).